The primary structure comprises 246 residues: Aquaporin AqpM (246 aa).

The Cytoplasmic segment spans residues Met1–Glu11. A helical transmembrane segment spans residues Phe12–Ile32. Residues Ala33–Trp55 are Extracellular-facing. Residues Val56–Ile76 traverse the membrane as a helical segment. Residues Ser77 to Tyr103 are Cytoplasmic-facing. The short motif at Asn82 to Ala84 is the NPA 1 element. A helical transmembrane segment spans residues Ile104–Ile124. At Gly125–Gln145 the chain is on the extracellular side. A helical membrane pass occupies residues Ala146 to Val166. The Cytoplasmic segment spans residues Asp167–Lys172. Residues Gly173–Ile193 traverse the membrane as a helical segment. The Extracellular segment spans residues Ser194–Asn217. The NPA 2 signature appears at Asn199–Ala201. Residues Leu218–Leu238 traverse the membrane as a helical segment. Over Thr239 to Glu246 the chain is Cytoplasmic.

This sequence belongs to the MIP/aquaporin (TC 1.A.8) family. Homotetramer.

Its subcellular location is the cell membrane. In terms of biological role, channel that permits osmotically driven movement of water in both directions. It mediates rapid entry or exit of water in response to abrupt changes in osmolarity. Also exhibits a transient but reproducible increase in the initial glycerol flux. The protein is Aquaporin AqpM (aqpM) of Methanothermobacter marburgensis (strain ATCC BAA-927 / DSM 2133 / JCM 14651 / NBRC 100331 / OCM 82 / Marburg) (Methanobacterium thermoautotrophicum).